The following is a 103-amino-acid chain: ATP-dependent Clp protease adapter protein ClpS 1 (103 aa).

Belongs to the ClpS family. In terms of assembly, binds to the N-terminal domain of the chaperone ClpA.

Its function is as follows. Involved in the modulation of the specificity of the ClpAP-mediated ATP-dependent protein degradation. This is ATP-dependent Clp protease adapter protein ClpS 1 from Rhodopseudomonas palustris (strain ATCC BAA-98 / CGA009).